Consider the following 192-residue polypeptide: dCTP deaminase, dUMP-forming (192 aa).

DCTP contacts are provided by residues 101-106, D119, 127-129, Q148, Y162, and Q174; these read KSSLGR and TLE. E129 acts as the Proton donor/acceptor in catalysis. Residues 169–192 form a disordered region; that stretch reads SRYQGQRGPTPSRSWQSWRTWPTR. A compositionally biased stretch (polar residues) spans 171 to 192; it reads YQGQRGPTPSRSWQSWRTWPTR.

This sequence belongs to the dCTP deaminase family. Homotrimer.

It carries out the reaction dCTP + 2 H2O = dUMP + NH4(+) + diphosphate. It participates in pyrimidine metabolism; dUMP biosynthesis; dUMP from dCTP: step 1/1. Functionally, bifunctional enzyme that catalyzes both the deamination of dCTP to dUTP and the hydrolysis of dUTP to dUMP without releasing the toxic dUTP intermediate. This Salinispora tropica (strain ATCC BAA-916 / DSM 44818 / JCM 13857 / NBRC 105044 / CNB-440) protein is dCTP deaminase, dUMP-forming.